Consider the following 1086-residue polypeptide: Tyrosine-protein kinase receptor svh-2 (1086 aa).

The N-terminal stretch at 1 to 34 (MVLGSSQSSAKELTTQSSIFRFLVLLLCFTSATG) is a signal peptide. Over 35 to 651 (GQINGKLLNG…DKKGSSPGWK (617 aa)) the chain is Extracellular. Asn276, Asn299, Asn461, Asn554, and Asn617 each carry an N-linked (GlcNAc...) asparagine glycan. Residues 652 to 672 (IAIAIISVMTIILIVAIIVYY) traverse the membrane as a helical segment. Over 673–1086 (MRNRFPRIKT…LLSECSETSV (414 aa)) the chain is Cytoplasmic. The 262-residue stretch at 735–996 (VDKLDPIGQG…SDLVTIIPNV (262 aa)) folds into the Protein kinase domain. ATP is bound by residues 741–749 (IGQGHYGVV) and Lys767. Residue Asp858 is the Proton acceptor of the active site. Tyr890 carries the phosphotyrosine modification. A disordered region spans residues 1056–1086 (AELPSDSPSTSTAIPQSTPYQLLSECSETSV). Positions 1061–1086 (DSPSTSTAIPQSTPYQLLSECSETSV) are enriched in polar residues.

Belongs to the protein kinase superfamily. Tyr protein kinase family. In terms of assembly, interacts (via cytoplasmic domain) with mlk-1. Interacts with shc-1 (via SH2 domain). May interact (when tyrosine-phosphorylated) with tns-1 (via SH2 domain). Post-translationally, may be autophosphorylated on Tyr-890 following dimerization. In terms of tissue distribution, expressed in body wall and vulva muscles, pharynx, intestine, excretory canals, distal tip cells and some neurons. Expressed in D-type motor neurons upon axon injury.

It is found in the cell membrane. The catalysed reaction is L-tyrosyl-[protein] + ATP = O-phospho-L-tyrosyl-[protein] + ADP + H(+). In terms of biological role, receptor tyrosine kinase which may phosphorylate mlk-1, a component of the mlk-1, mek-1 and kgb-1 pathway. Involved in axon regeneration after injury by promoting the generation of productive and stable growth cones. The chain is Tyrosine-protein kinase receptor svh-2 from Caenorhabditis elegans.